Consider the following 429-residue polypeptide: Ribosomal RNA small subunit methyltransferase B (429 aa).

S-adenosyl-L-methionine-binding positions include 254-260, D277, D303, and D322; that span reads CAAPGGK. Catalysis depends on C375, which acts as the Nucleophile.

Belongs to the class I-like SAM-binding methyltransferase superfamily. RsmB/NOP family.

Its subcellular location is the cytoplasm. It carries out the reaction cytidine(967) in 16S rRNA + S-adenosyl-L-methionine = 5-methylcytidine(967) in 16S rRNA + S-adenosyl-L-homocysteine + H(+). In terms of biological role, specifically methylates the cytosine at position 967 (m5C967) of 16S rRNA. The protein is Ribosomal RNA small subunit methyltransferase B of Shigella sonnei (strain Ss046).